The primary structure comprises 436 residues: 3-ketoacyl-CoA thiolase (436 aa).

The active-site Acyl-thioester intermediate is C99. Active-site proton acceptor residues include H392 and C422.

The protein belongs to the thiolase-like superfamily. Thiolase family. In terms of assembly, heterotetramer of two alpha chains (FadJ) and two beta chains (FadI).

It is found in the cytoplasm. The catalysed reaction is an acyl-CoA + acetyl-CoA = a 3-oxoacyl-CoA + CoA. It functions in the pathway lipid metabolism; fatty acid beta-oxidation. Functionally, catalyzes the final step of fatty acid oxidation in which acetyl-CoA is released and the CoA ester of a fatty acid two carbons shorter is formed. The sequence is that of 3-ketoacyl-CoA thiolase from Yersinia pestis bv. Antiqua (strain Angola).